The chain runs to 41 residues: Disintegrin viperistatin (41 aa).

Cystine bridges form between Cys-1/Cys-10, Cys-6/Cys-29, Cys-7/Cys-34, and Cys-19/Cys-36. One can recognise a Disintegrin domain in the interval 1–41 (CTTGPCCRQCKLKPAGTTCWKTSRTSHYCTGKSCDCPVYQG). The Cell attachment site; atypical (KTS) signature appears at 21-23 (KTS).

In terms of assembly, monomer. Expressed by the venom gland.

It is found in the secreted. Its function is as follows. Potent and highly selective inhibitor of alpha-1/beta-1 (ITGA1/ITGB1) integrin binding to collagen I and IV. Is about 25-fold more potent than obtustatin inhibiting the binding of this integrin to collagen IV. This chain is Disintegrin viperistatin, found in Daboia palaestinae (Palestine viper).